A 432-amino-acid chain; its full sequence is Sonic hedgehog protein (432 aa).

The N-terminal stretch at 1–26 (MDEMILLRRVLLAGFICALLVPSGLS) is a signal peptide. C27 carries the N-palmitoyl cysteine lipid modification. Residues 35 to 41 (TRKRFKK) carry the Cardin-Weintraub motif. Ca(2+) contacts are provided by E92, E93, D98, T128, E129, D132, and D134. Zn(2+)-binding residues include H143, D150, and H185. The Cholesterol glycine ester moiety is linked to residue G200.

This sequence belongs to the hedgehog family. As to quaternary structure, interacts with HHATL/GUP1 which negatively regulates HHAT-mediated palmitoylation of the SHH N-terminus. Interacts with BOC and CDON. Interacts with HHIP. Interacts with DISP1 via its cholesterol anchor. Interacts with SCUBE2. Multimer. In terms of processing, the C-terminal domain displays an autoproteolysis activity and a cholesterol transferase activity. Both activities result in the cleavage of the full-length protein and covalent attachment of a cholesterol moiety to the C-terminal of the newly generated N-terminal fragment (ShhN). Cholesterylation is required for the sonic hedgehog protein N-product targeting to lipid rafts and multimerization. ShhN is the active species in both local and long-range signaling, whereas the C-product (ShhC) is degraded in the reticulum endoplasmic. Post-translationally, N-palmitoylation by HHAT of ShhN is required for sonic hedgehog protein N-product multimerization and full activity. It is a prerequisite for the membrane-proximal positioning and the subsequent shedding of this N-terminal peptide. The lipidated N- and C-terminal peptides of ShhNp can be cleaved (shedding). The N-terminal palmitoylated peptide is cleaved at the Cardin-Weintraub (CW) motif site. The cleavage reduced the interactions with heparan sulfate. The cleavage is enhanced by SCUBE2.

The protein localises to the endoplasmic reticulum membrane. It localises to the golgi apparatus membrane. It is found in the cell membrane. The catalysed reaction is glycyl-L-cysteinyl-[protein] + cholesterol + H(+) = [protein]-C-terminal glycyl cholesterol ester + N-terminal L-cysteinyl-[protein]. Functionally, the C-terminal part of the sonic hedgehog protein precursor displays an autoproteolysis and a cholesterol transferase activity. Both activities result in the cleavage of the full-length protein into two parts (ShhN and ShhC) followed by the covalent attachment of a cholesterol moiety to the C-terminal of the newly generated ShhN. Both activities occur in the endoplasmic reticulum. Once cleaved, ShhC is degraded in the endoplasmic reticulum. Its function is as follows. The dually lipidated sonic hedgehog protein N-product (ShhNp) is a morphogen which is essential for a variety of patterning events during development. Induces ventral cell fate in the neural tube and somites. Involved in the patterning of the anterior-posterior axis of the developing limb bud. Essential for axon guidance. Binds to the patched (PTCH1) receptor, which functions in association with smoothened (SMO), to activate the transcription of target genes. In the absence of SHH, PTCH1 represses the constitutive signaling activity of SMO. This Cynops pyrrhogaster (Japanese fire-bellied newt) protein is Sonic hedgehog protein.